The sequence spans 836 residues: Protein AKNAD1 (836 aa).

Composition is skewed to polar residues over residues 159–172, 181–192, and 227–248; these read SWPK…TDQL, SNKPGSATTTEE, and SYQG…NTFK. Disordered stretches follow at residues 159 to 248 and 303 to 325; these read SWPK…NTFK and LETT…KITE. Residues 311 to 323 show a composition bias toward basic and acidic residues; it reads CVEKQHQEQKGKI. The stretch at 372–484 forms a coiled coil; sequence QKISQGKQMC…DVKEKMDESK (113 aa). Disordered regions lie at residues 510 to 545 and 575 to 596; these read SNEI…EAPN and MRLS…DCAE.

Belongs to the AKNA family.

This Homo sapiens (Human) protein is Protein AKNAD1 (AKNAD1).